The chain runs to 253 residues: Pimeloyl-[acyl-carrier protein] methyl ester esterase (253 aa).

Substrate contacts are provided by residues W18, 78 to 79 (SL), and 139 to 143 (FLALD). S78 serves as the catalytic Nucleophile. Catalysis depends on residues D203 and H231. H231 contacts substrate.

The protein belongs to the AB hydrolase superfamily. Carboxylesterase BioH family. In terms of assembly, monomer.

It is found in the cytoplasm. The enzyme catalyses 6-carboxyhexanoyl-[ACP] methyl ester + H2O = 6-carboxyhexanoyl-[ACP] + methanol + H(+). It participates in cofactor biosynthesis; biotin biosynthesis. Functionally, the physiological role of BioH is to remove the methyl group introduced by BioC when the pimeloyl moiety is complete. It allows to synthesize pimeloyl-ACP via the fatty acid synthetic pathway through the hydrolysis of the ester bonds of pimeloyl-ACP esters. The polypeptide is Pimeloyl-[acyl-carrier protein] methyl ester esterase (Xanthomonas oryzae pv. oryzae (strain MAFF 311018)).